Here is a 760-residue protein sequence, read N- to C-terminus: Probable 3',5'-cyclic phosphodiesterase pde-6 (760 aa).

Disordered regions lie at residues 1–47 (MGDR…AATA) and 410–429 (KRSV…ERRR). Residues 33–47 (PAARRGAQRAPAATA) are compositionally biased toward low complexity. A compositionally biased stretch (basic and acidic residues) spans 412 to 429 (SVVDAHREKRGSHGERRR). One can recognise a PDEase domain in the interval 426-750 (ERRRVSADVK…EKWKVMTSQW (325 aa)). The active-site Proton donor is the histidine 502. 4 residues coordinate a divalent metal cation: histidine 506, histidine 542, aspartate 543, and aspartate 656.

This sequence belongs to the cyclic nucleotide phosphodiesterase family. Requires a divalent metal cation as cofactor.

It carries out the reaction a nucleoside 3',5'-cyclic phosphate + H2O = a nucleoside 5'-phosphate + H(+). The protein is Probable 3',5'-cyclic phosphodiesterase pde-6 (pde-6) of Caenorhabditis elegans.